The sequence spans 46 residues: GTP cyclohydrolase 1 (46 aa).

Cysteine 7 contacts Zn(2+).

The protein belongs to the GTP cyclohydrolase I family. In terms of assembly, homomer.

It catalyses the reaction GTP + H2O = 7,8-dihydroneopterin 3'-triphosphate + formate + H(+). The protein operates within cofactor biosynthesis; 7,8-dihydroneopterin triphosphate biosynthesis; 7,8-dihydroneopterin triphosphate from GTP: step 1/1. The sequence is that of GTP cyclohydrolase 1 (folE) from Bacillus pumilus (Bacillus mesentericus).